We begin with the raw amino-acid sequence, 384 residues long: Histidinol-phosphate aminotransferase 1 (384 aa).

Lysine 233 bears the N6-(pyridoxal phosphate)lysine mark.

It belongs to the class-II pyridoxal-phosphate-dependent aminotransferase family. Histidinol-phosphate aminotransferase subfamily. As to quaternary structure, homodimer. Pyridoxal 5'-phosphate serves as cofactor.

It carries out the reaction L-histidinol phosphate + 2-oxoglutarate = 3-(imidazol-4-yl)-2-oxopropyl phosphate + L-glutamate. Its pathway is amino-acid biosynthesis; L-histidine biosynthesis; L-histidine from 5-phospho-alpha-D-ribose 1-diphosphate: step 7/9. The polypeptide is Histidinol-phosphate aminotransferase 1 (Thiobacillus denitrificans (strain ATCC 25259 / T1)).